Consider the following 482-residue polypeptide: Retrovirus-related Pol polyprotein from type-1 retrotransposable element R2 (482 aa).

One can recognise a Reverse transcriptase domain in the interval 1–84 (AYADDLILFA…DYFKYLGSRY (84 aa)). The nucleic acid-binding endonuclease stretch occupies residues 208-482 (QIPAVEKFYQ…ATGGRGRGDI (275 aa)).

The catalysed reaction is DNA(n) + a 2'-deoxyribonucleoside 5'-triphosphate = DNA(n+1) + diphosphate. This Popillia japonica (Japanese beetle) protein is Retrovirus-related Pol polyprotein from type-1 retrotransposable element R2.